The following is an 824-amino-acid chain: Silver exporting P-type ATPase (824 aa).

Residues 89–112 are disordered; it reads ASEHHHHHDHHEVSPDKIKQSHRQ. The span at 98 to 112 shows a compositional bias: basic and acidic residues; sequence HHEVSPDKIKQSHRQ. The next 6 membrane-spanning stretches (helical) occupy residues 167–187, 200–220, 234–254, 268–288, 427–447, and 455–475; these read FWLG…SHLF, TWLQ…PFFA, FTLV…ATVF, LVAI…LGQV, WFVP…SVWG, and GLIA…GLAT. Asp511 acts as the 4-aspartylphosphate intermediate in catalysis. 2 consecutive transmembrane segments (helical) span residues 764–784 and 785–805; these read IRQN…VAAG and LLYP…AMAL.

This sequence belongs to the cation transport ATPase (P-type) (TC 3.A.3) family. Type IB subfamily.

The protein localises to the cell membrane. The enzyme catalyses Ag(+)(in) + ATP + H2O = Ag(+)(out) + ADP + phosphate + H(+). Its function is as follows. Component of the sil cation-efflux system that confers resistance to silver. In Salmonella typhimurium, this protein is Silver exporting P-type ATPase (silP).